The sequence spans 246 residues: 5-oxoprolinase subunit A (246 aa).

It belongs to the LamB/PxpA family. In terms of assembly, forms a complex composed of PxpA, PxpB and PxpC.

The catalysed reaction is 5-oxo-L-proline + ATP + 2 H2O = L-glutamate + ADP + phosphate + H(+). Its function is as follows. Catalyzes the cleavage of 5-oxoproline to form L-glutamate coupled to the hydrolysis of ATP to ADP and inorganic phosphate. This Cupriavidus metallidurans (strain ATCC 43123 / DSM 2839 / NBRC 102507 / CH34) (Ralstonia metallidurans) protein is 5-oxoprolinase subunit A.